A 418-amino-acid chain; its full sequence is Probable serine/threonine-protein kinase DDB_G0280461 (418 aa).

The 258-residue stretch at 14–271 folds into the Protein kinase domain; that stretch reads KIEENEFSKG…IVQTLDQLAI (258 aa). Residues 20–28 and Lys-41 contribute to the ATP site; that span reads FSKGSFAKV. The active-site Proton acceptor is the Asp-139. Disordered stretches follow at residues 327–356 and 377–418; these read NNNN…NNNN and SVNS…CLIN. The segment covering 377–402 has biased composition (low complexity); that stretch reads SVNSSFSNSSLGSNGSNSSGTSTSSG. Residues 403–418 are compositionally biased toward basic residues; it reads GKKRSQKRKSWKCLIN.

Belongs to the protein kinase superfamily. TKL Ser/Thr protein kinase family.

The enzyme catalyses L-seryl-[protein] + ATP = O-phospho-L-seryl-[protein] + ADP + H(+). It carries out the reaction L-threonyl-[protein] + ATP = O-phospho-L-threonyl-[protein] + ADP + H(+). In Dictyostelium discoideum (Social amoeba), this protein is Probable serine/threonine-protein kinase DDB_G0280461.